A 235-amino-acid polypeptide reads, in one-letter code: Protein C1orf43 homolog (235 aa).

A helical membrane pass occupies residues 11-31 (VNVVLVMAYGSLVFVLLFIFV).

The protein resides in the membrane. The protein localises to the golgi apparatus. Its subcellular location is the mitochondrion. General regulator of phagocytosis. Required to uptake Gram negative bacterium by macrophages. The polypeptide is Protein C1orf43 homolog (Rattus norvegicus (Rat)).